Here is a 364-residue protein sequence, read N- to C-terminus: MITAEKKKKNKFLPNFEKQSIYSLRYDEMQQWLIDHGQQKFRAKQIFEWLYQKRVNTIDEMTNLSKELRQILKDHFAMTTLTTVVKQESKDGTIKFLFELQDGYTIETVLMRHEYGNSVCVTTQVGCRIGCTFCASTLGGLKRNLEAGEIVSQVLTVQKALDETNERVSQIVIMGIGEPFENYDEMMDFLRIVNDDNSLNIGARHITVSTSGIIPRIYDFAEEDIQINFAVSLHGAKDEIRSRLMPINRAYNVDKLMEAIRYYQEKTNRRVTFEYGLFGGVNDQLEHARDLAHLIKDLNCHVNLIPVNHVPERNYVKTPKDDIFKFEKELKRLGINATIRREQGSDIDAACGQLRAKERQVETR.

Residue Glu-107 is the Proton acceptor of the active site. A Radical SAM core domain is found at 113–346 (HEYGNSVCVT…ATIRREQGSD (234 aa)). Cysteines 120 and 351 form a disulfide. [4Fe-4S] cluster contacts are provided by Cys-127, Cys-131, and Cys-134. Residues 177–178 (GE), Ser-209, 232–234 (SLH), and Asn-308 each bind S-adenosyl-L-methionine. Residue Cys-351 is the S-methylcysteine intermediate of the active site.

Belongs to the radical SAM superfamily. RlmN family. It depends on [4Fe-4S] cluster as a cofactor.

The protein localises to the cytoplasm. The enzyme catalyses adenosine(2503) in 23S rRNA + 2 reduced [2Fe-2S]-[ferredoxin] + 2 S-adenosyl-L-methionine = 2-methyladenosine(2503) in 23S rRNA + 5'-deoxyadenosine + L-methionine + 2 oxidized [2Fe-2S]-[ferredoxin] + S-adenosyl-L-homocysteine. It carries out the reaction adenosine(37) in tRNA + 2 reduced [2Fe-2S]-[ferredoxin] + 2 S-adenosyl-L-methionine = 2-methyladenosine(37) in tRNA + 5'-deoxyadenosine + L-methionine + 2 oxidized [2Fe-2S]-[ferredoxin] + S-adenosyl-L-homocysteine. Specifically methylates position 2 of adenine 2503 in 23S rRNA and position 2 of adenine 37 in tRNAs. Confers resistance to some classes of antibiotics. The sequence is that of Probable dual-specificity RNA methyltransferase RlmN from Staphylococcus epidermidis (strain ATCC 35984 / DSM 28319 / BCRC 17069 / CCUG 31568 / BM 3577 / RP62A).